The sequence spans 266 residues: Tryptophan synthase alpha chain (266 aa).

Residues Glu51 and Asp62 each act as proton acceptor in the active site.

The protein belongs to the TrpA family. As to quaternary structure, tetramer of two alpha and two beta chains.

The catalysed reaction is (1S,2R)-1-C-(indol-3-yl)glycerol 3-phosphate + L-serine = D-glyceraldehyde 3-phosphate + L-tryptophan + H2O. The protein operates within amino-acid biosynthesis; L-tryptophan biosynthesis; L-tryptophan from chorismate: step 5/5. Functionally, the alpha subunit is responsible for the aldol cleavage of indoleglycerol phosphate to indole and glyceraldehyde 3-phosphate. This chain is Tryptophan synthase alpha chain, found in Prochlorococcus marinus (strain NATL1A).